Reading from the N-terminus, the 154-residue chain is Protein X (154 aa).

A mitochondrial targeting sequence region spans residues 68 to 117 (PCALRFTSARCMETTVNAPRNLPKVLHKRTLGLSTMSTTGIETYFKDCVF).

The protein belongs to the orthohepadnavirus protein X family. May form homodimer. May interact with host CEBPA, CFLAR, CREB1, DDB1, E4F1, HBXIP, HSPD1/HSP60, NFKBIA, POLR2E and SMAD4. Interacts with host SMC5-SMC6 complex and induces its degradation. Interacts with host TRPC4AP; leading to prevent ubiquitination of TRPC4AP. Interacts with host PLSCR1; this interaction promotes ubiquitination and degradation of HBx and impairs HBx-mediated cell proliferation. A fraction may be phosphorylated in insect cells and HepG2 cells, a human hepatoblastoma cell line. Phosphorylated in vitro by host protein kinase C or mitogen-activated protein kinase. N-acetylated in insect cells.

The protein resides in the host cytoplasm. The protein localises to the host nucleus. It is found in the host mitochondrion. Functionally, multifunctional protein that plays a role in silencing host antiviral defenses and promoting viral transcription. Does not seem to be essential for HBV infection. May be directly involved in development of cirrhosis and liver cancer (hepatocellular carcinoma). Most of cytosolic activities involve modulation of cytosolic calcium. The effect on apoptosis is controversial depending on the cell types in which the studies have been conducted. May induce apoptosis by localizing in mitochondria and causing loss of mitochondrial membrane potential. May also modulate apoptosis by binding host CFLAR, a key regulator of the death-inducing signaling complex (DISC). Promotes viral transcription by using the host E3 ubiquitin ligase DDB1 to target the SMC5-SMC6 complex to proteasomal degradation. This host complex would otherwise bind to viral episomal DNA, and prevents its transcription. Moderately stimulates transcription of many different viral and cellular transcription elements. Promoters and enhancers stimulated by HBx contain DNA binding sites for NF-kappa-B, AP-1, AP-2, c-EBP, ATF/CREB, or the calcium-activated factor NF-AT. This is Protein X from Orangutan hepatitis B virus (isolate Somad) (HBVoru).